The primary structure comprises 279 residues: Movement protein (279 aa).

It belongs to the cucumovirus movement protein family.

Its subcellular location is the host cell junction. The protein resides in the host plasmodesma. In terms of biological role, transports viral genome to neighboring plant cells directly through plasmosdesmata, without any budding. The movement protein allows efficient cell to cell propagation, by bypassing the host cell wall barrier. Acts by forming a tubular structure at the host plasmodesmata, enlarging it enough to allow free passage of virion capsids. The sequence is that of Movement protein from Cucumber mosaic virus (strain Ixora) (CMV).